The sequence spans 126 residues: Large ribosomal subunit protein bL12 (126 aa).

This sequence belongs to the bacterial ribosomal protein bL12 family. In terms of assembly, homodimer. Part of the ribosomal stalk of the 50S ribosomal subunit. Forms a multimeric L10(L12)X complex, where L10 forms an elongated spine to which 2 to 4 L12 dimers bind in a sequential fashion. Binds GTP-bound translation factors.

Forms part of the ribosomal stalk which helps the ribosome interact with GTP-bound translation factors. Is thus essential for accurate translation. This chain is Large ribosomal subunit protein bL12, found in Koribacter versatilis (strain Ellin345).